The chain runs to 64 residues: PYLa/PGLa A (64 aa).

Residues 1–20 form the signal peptide; that stretch reads MYKQIFLCLIIAALCATIMA. The propeptide occupies 21–35; sequence EASAFADADEDDDKR. Leu-59 carries the leucine amide modification. Residues 60 to 64 constitute a propeptide that is removed on maturation; sequence GRRDS.

The protein belongs to the gastrin/cholecystokinin family. Magainin subfamily. Expressed by the skin glands. Synthesized in the stomach and stored in a novel granular multinucleated cell in the gastric mucosa. Stored as active, processed peptides in large granules within the granular gland secretions of the skin.

The protein localises to the secreted. In terms of biological role, PGLa and PGLa-H display a broad-spectrum of antibacterial activity against a range of Gram-positive and Gram-negative bacteria. PGLa also displays antifungal activity against C.albicans ATCC 14053. PGLa-H shows moderate antibacterial activity against the multidrug-resistant methicillin-resistant S.aureus (MRSA) but exhibits very little hemolytic activity. The chain is PYLa/PGLa A (pgla-a) from Xenopus laevis (African clawed frog).